The primary structure comprises 712 residues: MFDIKRKTIEWGGKTLVLETGRIARQADGAVLATMGETVVLATAVFAKSQKPGQDFFPLTVNYQEKTFAAGKIPGGFFKREGRPSEKETLVSRLIDRPIRPLFVKGFKNEVQVVVTVLQHDLENDPDILGMVAASAALCLSGAPFMGPIGAARVGWVDGAYVLNPTLDEMKESKMDLVVAGTADAVMMVESEIQELSEEIVLGGVNFAHQQMQAVIDAIIDLAEHAAKEPFAFEPEDTDAIKAKMKDLVGADIAAAYKIQKKQDRYEAVGAAKKKAIAALGLSDENPTGYDPLKLGAIFKELEADVVRRGILDTGLRIDGRDVKTVRPILGEVGILPRTHGSALFTRGETQAIVVATLGTGDDEQFIDALEGTYKESFLLHYNFPPYSVGETGRMGSPGRREIGHGKLAWRALRPMLPTKEDFPYTIRLVSEITESNGSSSMATVCGSSLAMMDAGVPLVRPVSGIAMGLILEQDGFAVLSDILGDEDHLGDMDFKVAGTSEGLTSLQMDIKIAGITPAIMEQALAQAKEGRAHILGEMNKAMDAPRADVGDFAPKIETINIPTDKIREVIGSGGKVIREIVATTGAKVDINDDGVVKVSASDGAKIKAAIDWIKSITDEAEVGKIYDGKVVKVVDFGAFVNFFGAKDGLVHVSQISNERVAKPSDVLKEGQMVKVKLLGFDDRGKTKLSMKVVDQETGEDLSKKEAAAEEA.

Mg(2+)-binding residues include aspartate 488 and aspartate 494. Residues 555 to 614 (PKIETINIPTDKIREVIGSGGKVIREIVATTGAKVDINDDGVVKVSASDGAKIKAAIDWI) form the KH domain. In terms of domain architecture, S1 motif spans 624 to 692 (GKIYDGKVVK…DRGKTKLSMK (69 aa)).

This sequence belongs to the polyribonucleotide nucleotidyltransferase family. It depends on Mg(2+) as a cofactor.

It is found in the cytoplasm. The catalysed reaction is RNA(n+1) + phosphate = RNA(n) + a ribonucleoside 5'-diphosphate. Its function is as follows. Involved in mRNA degradation. Catalyzes the phosphorolysis of single-stranded polyribonucleotides processively in the 3'- to 5'-direction. The polypeptide is Polyribonucleotide nucleotidyltransferase (Caulobacter vibrioides (strain NA1000 / CB15N) (Caulobacter crescentus)).